Reading from the N-terminus, the 88-residue chain is Cell division topological specificity factor (88 aa).

It belongs to the MinE family.

Prevents the cell division inhibition by proteins MinC and MinD at internal division sites while permitting inhibition at polar sites. This ensures cell division at the proper site by restricting the formation of a division septum at the midpoint of the long axis of the cell. This Cronobacter sakazakii (strain ATCC BAA-894) (Enterobacter sakazakii) protein is Cell division topological specificity factor.